The chain runs to 216 residues: Ras-related protein Rab11C (216 aa).

19–26 (GDSGVGKS) contacts GTP. The Effector region motif lies at 41-49 (SKSTIGVEF). GTP-binding positions include 67–71 (DTAGQ) and 125–128 (NKSD). 2 S-geranylgeranyl cysteine lipidation sites follow: Cys213 and Cys214.

This sequence belongs to the small GTPase superfamily. Rab family.

The protein resides in the cell membrane. This Lotus japonicus (Lotus corniculatus var. japonicus) protein is Ras-related protein Rab11C (RAB11C).